The primary structure comprises 105 residues: UPF0145 protein Mevan_1624 (105 aa).

Belongs to the UPF0145 family.

This is UPF0145 protein Mevan_1624 from Methanococcus vannielii (strain ATCC 35089 / DSM 1224 / JCM 13029 / OCM 148 / SB).